The primary structure comprises 523 residues: Frizzled-4 (523 aa).

An N-terminal signal peptide occupies residues 1–22 (MGARSLTLLYLLCCLVVGLIAG). Residues 23-198 (FGEEEERSCD…KCGYDSGLYN (176 aa)) are Extracellular-facing. Residues 26–147 (EEERSCDPIR…NDHNHMCMEG (122 aa)) enclose the FZ domain. 8 disulfides stabilise this stretch: C31–C92, C39–C85, C76–C114, C103–C144, C107–C131, C167–C186, C190–C268, and C288–C363. N45 carries an N-linked (GlcNAc...) asparagine glycan. N-linked (GlcNAc...) asparagine glycosylation is present at N130. Residues 199–229 (RLSKEFTDIWMAVWASLCFISTAFTVLTFLI) form a helical membrane-spanning segment. Residues 230-235 (DSSRFC) are Cytoplasmic-facing. A helical transmembrane segment spans residues 236–261 (YPERPIIFLSMCYNIYSIAYIVRLTV). The Extracellular portion of the chain corresponds to 262 to 285 (GRERISCDFEEAAEPVLIQEGLKN). A helical transmembrane segment spans residues 286–319 (TGCAIIFLLMYFFGMASSIWWVILTLTWFLAAGL). The Cytoplasmic segment spans residues 320-322 (KWG). Residues 323–351 (HEAIEMHSSYFHIAAWAIPAVKTIVILIM) traverse the membrane as a helical segment. Topologically, residues 352 to 369 (RLVDADELTGLCYVGNQN) are extracellular. The helical transmembrane segment at 370–396 (IDALTGFVVAPLFTYLVIGTLFIAAGL) threads the bilayer. Residues 397–417 (VALFKIRSNLQKDGTKTDKLE) lie on the Cytoplasmic side of the membrane. The helical transmembrane segment at 418-443 (RLMVKIGVFSVLYTVPATCVIACYFY) threads the bilayer. Residues 444-459 (EVSNWNVFRYTADDSN) are Extracellular-facing. Residues 460-481 (MAVEMLNIFMSLLVGITSGMWI) traverse the membrane as a helical segment. The Cytoplasmic portion of the chain corresponds to 482–523 (WSAKTLHTWQKCTNRLVNSGKVKRKKRVDGWVKPGKGNETVV). Positions 485–490 (KTLHTW) match the Lys-Thr-X-X-X-Trp motif, mediates interaction with the PDZ domain of Dvl family members motif. A PDZ-binding motif is present at residues 521–523 (TVV).

The protein belongs to the G-protein coupled receptor Fz/Smo family. In terms of assembly, interacts (via FZ domain) with tsku; tsku competes with wnt2b for binding to fzd4, inhibiting Wnt signaling and repressing peripheral eye development.

The protein resides in the cell membrane. Functionally, receptor for Wnt proteins. Most frizzled receptors are coupled to the beta-catenin canonical signaling pathway, which leads to the activation of disheveled proteins, inhibition of GSK-3 kinase, nuclear accumulation of beta-catenin and activation of Wnt target genes. A second signaling pathway involving PKC and calcium fluxes has been seen for some family members, but it is not yet clear if it represents a distinct pathway or if it can be integrated in the canonical pathway, as PKC seems to be required for Wnt-mediated inactivation of GSK-3 kinase. Both pathways seem to involve interactions with G-proteins. May be involved in transduction and intercellular transmission of polarity information during tissue morphogenesis and/or in differentiated tissues. Activated by Wnt5A. The chain is Frizzled-4 (fzd4) from Xenopus laevis (African clawed frog).